Consider the following 257-residue polypeptide: UPF0246 protein BT_3869 (257 aa).

The protein belongs to the UPF0246 family.

The chain is UPF0246 protein BT_3869 from Bacteroides thetaiotaomicron (strain ATCC 29148 / DSM 2079 / JCM 5827 / CCUG 10774 / NCTC 10582 / VPI-5482 / E50).